The sequence spans 29 residues: Cytochrome b6-f complex subunit 8 (29 aa).

Residues 3–23 (IISLGWSSLLVVFTFSLSLVV) traverse the membrane as a helical segment.

It belongs to the PetN family. As to quaternary structure, the 4 large subunits of the cytochrome b6-f complex are cytochrome b6, subunit IV (17 kDa polypeptide, PetD), cytochrome f and the Rieske protein, while the 4 small subunits are PetG, PetL, PetM and PetN. The complex functions as a dimer.

It is found in the plastid. The protein resides in the chloroplast thylakoid membrane. Component of the cytochrome b6-f complex, which mediates electron transfer between photosystem II (PSII) and photosystem I (PSI), cyclic electron flow around PSI, and state transitions. The polypeptide is Cytochrome b6-f complex subunit 8 (Rhodomonas salina (Cryptomonas salina)).